The following is a 120-amino-acid chain: NAD(P)H-quinone oxidoreductase subunit 3, chloroplastic (120 aa).

3 consecutive transmembrane segments (helical) span residues 11-31, 65-85, and 89-109; these read VVFF…SKLI, FALI…WAIV, and LGIT…IGLV.

It belongs to the complex I subunit 3 family. NDH is composed of at least 16 different subunits, 5 of which are encoded in the nucleus.

The protein resides in the plastid. It localises to the chloroplast thylakoid membrane. The catalysed reaction is a plastoquinone + NADH + (n+1) H(+)(in) = a plastoquinol + NAD(+) + n H(+)(out). It catalyses the reaction a plastoquinone + NADPH + (n+1) H(+)(in) = a plastoquinol + NADP(+) + n H(+)(out). Its function is as follows. NDH shuttles electrons from NAD(P)H:plastoquinone, via FMN and iron-sulfur (Fe-S) centers, to quinones in the photosynthetic chain and possibly in a chloroplast respiratory chain. The immediate electron acceptor for the enzyme in this species is believed to be plastoquinone. Couples the redox reaction to proton translocation, and thus conserves the redox energy in a proton gradient. The sequence is that of NAD(P)H-quinone oxidoreductase subunit 3, chloroplastic from Mesostigma viride (Green alga).